Reading from the N-terminus, the 483-residue chain is Homoserine O-acetyltransferase (483 aa).

The region spanning 47-346 (NVILICHALT…HFGHDAFLLE (300 aa)) is the AB hydrolase-1 domain. The Nucleophile role is filled by Ser152. Arg221 serves as a coordination point for substrate. Residues Asp307 and His340 contribute to the active site. Asp341 is a substrate binding site. CBS domains follow at residues 367–423 (MSED…KISS) and 428–483 (LSRD…KGTK).

This sequence belongs to the AB hydrolase superfamily. MetX family. Homodimer.

Its subcellular location is the cytoplasm. The catalysed reaction is L-homoserine + acetyl-CoA = O-acetyl-L-homoserine + CoA. It participates in amino-acid biosynthesis; L-methionine biosynthesis via de novo pathway; O-acetyl-L-homoserine from L-homoserine: step 1/1. Transfers an acetyl group from acetyl-CoA to L-homoserine, forming acetyl-L-homoserine. This chain is Homoserine O-acetyltransferase, found in Methanohalophilus mahii (strain ATCC 35705 / DSM 5219 / SLP).